The chain runs to 473 residues: Glutathione reductase, mitochondrial (473 aa).

Residues Ser-30 and Gly-31 each contribute to the FAD site. Residue Ser-30 coordinates glutathione. Arg-37 is a binding site for glutathione. Residues Glu-50, Thr-57, Cys-58, and Lys-66 each contribute to the FAD site. Cys-58 and Cys-63 are disulfide-bonded. Glutathione is bound at residue Tyr-114. Ala-130 contributes to the FAD binding site. Ala-190, Ile-193, Glu-196, Arg-213, Arg-219, and Gly-279 together coordinate NADP(+). Asp-320 contacts FAD. Position 326 (Leu-326) interacts with NADP(+). Thr-328 is a binding site for FAD. Glutathione is bound at residue Arg-336. Val-359 serves as a coordination point for NADP(+). An FAD-binding site is contributed by His-456. The Proton acceptor role is filled by His-456.

This sequence belongs to the class-I pyridine nucleotide-disulfide oxidoreductase family. FAD is required as a cofactor. As to expression, expressed at all larval stages and in adults in intestine, vulva muscle, pharynx and some cells in the tail.

The protein resides in the cytoplasm. It is found in the mitochondrion. It carries out the reaction 2 glutathione + NADP(+) = glutathione disulfide + NADPH + H(+). Catalyzes the reduction of glutathione disulfide (GSSG) to reduced glutathione (GSH). Constitutes the major mechanism to maintain a high GSH:GSSG ratio in the cytosol. Involved in resistance to oxidative stress and starvation. Together with thioredoxin reductase txtr-1, required for the reduction of disulfide groups in the cuticle during molting. This is Glutathione reductase, mitochondrial from Caenorhabditis elegans.